A 218-amino-acid polypeptide reads, in one-letter code: RHEVELVAQTTIFIFGGYETTSTSLSFIIYELATHPDVQQKLQEEIDATFPNKAPPTYDALVQMEYLDMVVNETLRMFPIAGRLERLCKKDVEIHGVSIPKGTTVMVPLFVLHNNPEFWPEPEEFRPERFSKKNKDGINPYVYLPFGTGPRNCVGMRFALMNIKLALVRILQNFSFIPCKETQIPLKLYTQGLTQPEQPVILKVAPRGLGPQAEPDFL.

C153 is a binding site for heme.

This sequence belongs to the cytochrome P450 family. Requires heme as cofactor.

The protein localises to the endoplasmic reticulum membrane. It localises to the microsome membrane. The catalysed reaction is an organic molecule + reduced [NADPH--hemoprotein reductase] + O2 = an alcohol + oxidized [NADPH--hemoprotein reductase] + H2O + H(+). Its function is as follows. Cytochromes P450 are a group of heme-thiolate monooxygenases. In liver microsomes, this enzyme is involved in an NADPH-dependent electron transport pathway. It oxidizes a variety of structurally unrelated compounds, including steroids, fatty acids, and xenobiotics. The protein is Cytochrome P450 3A19 (CYP3A19) of Capra hircus aegagrus (Wild goat).